The chain runs to 349 residues: MNIKSALNRVVNQLDLSTDEMRDVMREIMTGQCTEAQIGAFLMGMRMKSETIDEIVGAVSVMRELADKVELKTLDGVVDIVGTGGDGANIFNVSTASAFVISAAGCTVAKHGNRAVSGKSGSADLLEAAGVYLNLTPVQVARCIDSVGIGFMFAQSHHSAMKHTAGPRRELGLRTLFNMLGPLTNPAGVRHQVVGVFNQALCRPLAEVLLRLGSKHVLVVHSQDGLDEFSLAAPTFVAELKNGEVTEYWVQPEDLGIKSQSLYGLAVESPAQSLELIRDALGRRKTEIGQKAAEMIVLNAGAALYAADHATSLKEGVALAHDALHTGLAREKLDELGAFTAVFKQENEA.

Residues G82, 85–86, 92–95, 110–118, and S122 each bind 5-phospho-alpha-D-ribose 1-diphosphate; these read GD, NVST, and KHGNRAVSG. An anthranilate-binding site is contributed by G82. S94 is a Mg(2+) binding site. N113 is an anthranilate binding site. R168 contributes to the anthranilate binding site. Mg(2+) is bound by residues D227 and E228.

Belongs to the anthranilate phosphoribosyltransferase family. Homodimer. It depends on Mg(2+) as a cofactor.

The catalysed reaction is N-(5-phospho-beta-D-ribosyl)anthranilate + diphosphate = 5-phospho-alpha-D-ribose 1-diphosphate + anthranilate. The protein operates within amino-acid biosynthesis; L-tryptophan biosynthesis; L-tryptophan from chorismate: step 2/5. Catalyzes the transfer of the phosphoribosyl group of 5-phosphorylribose-1-pyrophosphate (PRPP) to anthranilate to yield N-(5'-phosphoribosyl)-anthranilate (PRA). The chain is Anthranilate phosphoribosyltransferase from Pseudomonas syringae pv. tomato (strain ATCC BAA-871 / DC3000).